The following is a 235-amino-acid chain: Glucosamine-6-phosphate deaminase (235 aa).

The active-site Proton acceptor; for enolization step is the Asp-62. Asn-128 acts as the For ring-opening step in catalysis. His-130 acts as the Proton acceptor; for ring-opening step in catalysis. Glu-135 serves as the catalytic For ring-opening step.

The protein belongs to the glucosamine/galactosamine-6-phosphate isomerase family. NagB subfamily.

It catalyses the reaction alpha-D-glucosamine 6-phosphate + H2O = beta-D-fructose 6-phosphate + NH4(+). The protein operates within amino-sugar metabolism; N-acetylneuraminate degradation; D-fructose 6-phosphate from N-acetylneuraminate: step 5/5. Its function is as follows. Catalyzes the reversible isomerization-deamination of glucosamine 6-phosphate (GlcN6P) to form fructose 6-phosphate (Fru6P) and ammonium ion. This is Glucosamine-6-phosphate deaminase from Streptococcus pneumoniae (strain JJA).